The following is a 492-amino-acid chain: Ketol-acid reductoisomerase (NADP(+)) (492 aa).

Positions 14 to 208 (LDQLGRCRFM…GGHKAGVLES (195 aa)) constitute a KARI N-terminal Rossmann domain. NADP(+) contacts are provided by residues 45-48 (CGAQ), R68, R76, S78, and 108-110 (DKQ). Residue H132 is part of the active site. Residue G158 participates in NADP(+) binding. 2 KARI C-terminal knotted domains span residues 209-344 (SFVA…NAPK) and 345-485 (YDGK…MTDM). The Mg(2+) site is built by D217, E221, E389, and E393. S414 contacts substrate.

This sequence belongs to the ketol-acid reductoisomerase family. Requires Mg(2+) as cofactor.

The enzyme catalyses (2R)-2,3-dihydroxy-3-methylbutanoate + NADP(+) = (2S)-2-acetolactate + NADPH + H(+). The catalysed reaction is (2R,3R)-2,3-dihydroxy-3-methylpentanoate + NADP(+) = (S)-2-ethyl-2-hydroxy-3-oxobutanoate + NADPH + H(+). The protein operates within amino-acid biosynthesis; L-isoleucine biosynthesis; L-isoleucine from 2-oxobutanoate: step 2/4. It functions in the pathway amino-acid biosynthesis; L-valine biosynthesis; L-valine from pyruvate: step 2/4. In terms of biological role, involved in the biosynthesis of branched-chain amino acids (BCAA). Catalyzes an alkyl-migration followed by a ketol-acid reduction of (S)-2-acetolactate (S2AL) to yield (R)-2,3-dihydroxy-isovalerate. In the isomerase reaction, S2AL is rearranged via a Mg-dependent methyl migration to produce 3-hydroxy-3-methyl-2-ketobutyrate (HMKB). In the reductase reaction, this 2-ketoacid undergoes a metal-dependent reduction by NADPH to yield (R)-2,3-dihydroxy-isovalerate. This Haemophilus influenzae (strain PittGG) protein is Ketol-acid reductoisomerase (NADP(+)).